The chain runs to 224 residues: Lipoprotein-releasing system ATP-binding protein LolD (224 aa).

An ABC transporter domain is found at 4 to 224; sequence LSIRNVFKSY…RLAGGEVSEA (221 aa). 40 to 47 is an ATP binding site; that stretch reads GASGAGKS.

Belongs to the ABC transporter superfamily. Lipoprotein translocase (TC 3.A.1.125) family. The complex is composed of two ATP-binding proteins (LolD) and two transmembrane proteins (LolC and LolE).

The protein resides in the cell inner membrane. Its function is as follows. Part of the ABC transporter complex LolCDE involved in the translocation of mature outer membrane-directed lipoproteins, from the inner membrane to the periplasmic chaperone, LolA. Responsible for the formation of the LolA-lipoprotein complex in an ATP-dependent manner. The sequence is that of Lipoprotein-releasing system ATP-binding protein LolD from Myxococcus xanthus (strain DK1622).